Reading from the N-terminus, the 352-residue chain is Pyruvate dehydrogenase E1 component subunit beta, mitochondrial (352 aa).

Residues 1–21 (MALRKCGNLFVARLAGTSTRA) constitute a mitochondrion transit peptide. Residue E81 coordinates thiamine diphosphate. K(+) is bound by residues I134, A182, I183, D185, and N187.

As to quaternary structure, tetramer of 2 alpha and 2 beta subunits. Thiamine diphosphate is required as a cofactor.

The protein resides in the mitochondrion matrix. It carries out the reaction N(6)-[(R)-lipoyl]-L-lysyl-[protein] + pyruvate + H(+) = N(6)-[(R)-S(8)-acetyldihydrolipoyl]-L-lysyl-[protein] + CO2. Its function is as follows. The pyruvate dehydrogenase complex catalyzes the overall conversion of pyruvate to acetyl-CoA and CO(2). It contains multiple copies of three enzymatic components: pyruvate dehydrogenase (E1), dihydrolipoamide acetyltransferase (E2) and lipoamide dehydrogenase (E3). This is Pyruvate dehydrogenase E1 component subunit beta, mitochondrial (pdhb-1) from Caenorhabditis elegans.